The following is a 1621-amino-acid chain: Nestin (1621 aa).

N-acetylmethionine is present on Met1. Residues Met1–Glu7 form a head region. Residues Glu8–Leu43 are coil 1A. The IF rod domain occupies Glu8–Leu313. Residues Arg44 to His55 are linker 1. Residues Ala56 to Leu151 form a coil 1B region. Residues Asn152–Pro173 are linker 12. Residues Glu174 to Gly192 form a coil 2A region. The tract at residues Tyr193–Glu195 is linker 2. Residues Arg196–Leu313 are coil 2B. Ser311 carries the phosphoserine modification. Residues Gln314 to Asp1621 are tail. Thr315 is modified (phosphothreonine). Phosphoserine is present on Ser325. Thr338 is modified (phosphothreonine). Phosphoserine is present on residues Ser355 and Ser358. Thr388 carries the phosphothreonine modification. A phosphoserine mark is found at Ser398, Ser471, Ser476, Ser548, Ser564, Ser578, Ser588, Ser638, Ser680, Ser702, Ser746, and Ser768. Positions Ser439–Phe490 are disordered. Residues Leu670–Leu788 are disordered. Basic and acidic residues-rich tracts occupy residues Glu687–Leu725, Leu736–Gly770, and Pro779–Leu788. Ser790 is subject to Phosphoserine. A Glycyl lysine isopeptide (Lys-Gly) (interchain with G-Cter in SUMO1); alternate cross-link involves residue Lys811. Residue Lys811 forms a Glycyl lysine isopeptide (Lys-Gly) (interchain with G-Cter in SUMO2); alternate linkage. A phosphoserine mark is found at Ser820, Ser831, and Ser842. Thr851 carries the post-translational modification Phosphothreonine. Phosphoserine is present on residues Ser894, Ser905, Ser913, and Ser934. The disordered stretch occupies residues Leu895–Gly1593. 4 stretches are compositionally biased toward basic and acidic residues: residues Arg904–Glu936, Gln949–Glu960, Leu980–Val994, and Gly1012–Gly1024. Ser1016 bears the Phosphoserine mark. Residues Gly1085–Glu1098 show a composition bias toward low complexity. Residues Pro1099–Asp1110 are compositionally biased toward gly residues. 2 stretches are compositionally biased toward basic and acidic residues: residues Leu1129 to Glu1145 and Gly1159 to Glu1184. Ser1261, Ser1282, Ser1286, Ser1310, Ser1347, Ser1409, Ser1418, and Ser1452 each carry phosphoserine. The segment covering Pro1275–Gly1292 has biased composition (acidic residues). The segment covering Ser1409 to Glu1428 has biased composition (acidic residues). 2 stretches are compositionally biased toward low complexity: residues Gly1440–Gln1453 and Ser1460–Asp1470. Positions Glu1486–Pro1495 are enriched in polar residues. Phosphoserine occurs at positions 1496, 1498, 1577, 1617, and 1618.

This sequence belongs to the intermediate filament family. Forms homodimers and homotetramers in vitro. In mixtures with other intermediate filament proteins such as vimentin and alpha-internexin, tis protein preferentially forms heterodimers which can assemble to form intermediate filaments if nestin does not exceed 25%. Interacts with FHOD3. Constitutively phosphorylated. This increases during mitosis when the cytoplasmic intermediate filament network is reorganized. In terms of tissue distribution, CNS stem cells.

Required for brain and eye development. Promotes the disassembly of phosphorylated vimentin intermediate filaments (IF) during mitosis and may play a role in the trafficking and distribution of IF proteins and other cellular factors to daughter cells during progenitor cell division. Required for survival, renewal and mitogen-stimulated proliferation of neural progenitor cells. In Homo sapiens (Human), this protein is Nestin (NES).